Consider the following 289-residue polypeptide: Pseudouridine-5'-phosphate glycosidase (289 aa).

Glutamate 10 (proton donor) is an active-site residue. Lysine 71 and valine 91 together coordinate substrate. Aspartate 121 is a Mn(2+) binding site. Position 123 to 125 (123 to 125) interacts with substrate; it reads SQD. Lysine 142 (nucleophile) is an active-site residue.

Belongs to the pseudouridine-5'-phosphate glycosidase family. As to quaternary structure, homotrimer. Requires Mn(2+) as cofactor.

The catalysed reaction is D-ribose 5-phosphate + uracil = psi-UMP + H2O. Catalyzes the reversible cleavage of pseudouridine 5'-phosphate (PsiMP) to ribose 5-phosphate and uracil. Functions biologically in the cleavage direction, as part of a pseudouridine degradation pathway. The chain is Pseudouridine-5'-phosphate glycosidase from Kosmotoga olearia (strain ATCC BAA-1733 / DSM 21960 / TBF 19.5.1).